Here is a 1284-residue protein sequence, read N- to C-terminus: ABC multidrug transporter atrC (1284 aa).

A compositionally biased stretch (basic and acidic residues) spans 1 to 11; sequence MKSTAESKETP. Residues 1–24 form a disordered region; that stretch reads MKSTAESKETPSQDESTTSVPCTE. 6 helical membrane passes run 55 to 75, 99 to 119, 178 to 198, 203 to 223, 282 to 302, and 320 to 340; these read AVAI…NLIF, AAEL…LSYT, IGLL…AFVV, TLIC…VAAV, LLGL…GLAF, and IFTV…LAPY. One can recognise an ABC transmembrane type-1 1 domain in the interval 55 to 346; it reads AVAILAACAS…LAPYSIEFSR (292 aa). Residues 381–626 enclose the ABC transporter 1 domain; it reads VELENVTFSY…DGVYAGLVKI (246 aa). Residues N385 and N401 are each glycosylated (N-linked (GlcNAc...) asparagine). 416-423 contributes to the ATP binding site; it reads GQSGSGKS. N488 and N632 each carry an N-linked (GlcNAc...) asparagine glycan. A run of 2 helical transmembrane segments spans residues 705-725 and 745-765; these read LVVL…AILM and FYAS…LAVG. Residues 705–992 enclose the ABC transmembrane type-1 2 domain; it reads LVVLLGCLGG…LFQWSTSITK (288 aa). N800 carries an N-linked (GlcNAc...) asparagine glycan. 4 consecutive transmembrane segments (helical) span residues 824-844, 846-866, 931-951, and 955-975; these read IALV…AIAF, WKLG…AGMV, MICF…GFWY, and LVSL…SVFF. The N-linked (GlcNAc...) asparagine glycan is linked to N995. An ABC transporter 2 domain is found at 1027-1280; the sequence is IAMDNVRFSY…GGLYRRMCEA (254 aa). 1062-1069 contributes to the ATP binding site; the sequence is GSSGCGKS. N1122 carries an N-linked (GlcNAc...) asparagine glycan.

It belongs to the ABC transporter superfamily. ABCB family. Multidrug resistance exporter (TC 3.A.1.201) subfamily.

The protein localises to the cell membrane. Its function is as follows. Pleiotropic ABC efflux transporter involved in the protection of the cells against a wide range of toxic compounds. The sequence is that of ABC multidrug transporter atrC from Emericella nidulans (strain FGSC A4 / ATCC 38163 / CBS 112.46 / NRRL 194 / M139) (Aspergillus nidulans).